Reading from the N-terminus, the 125-residue chain is uncharacterized protein (125 aa).

A helical membrane pass occupies residues 7–29 (NCMFLYVYTDVCVRLCASIFYIM).

Its subcellular location is the membrane. This is an uncharacterized protein from Saccharomyces cerevisiae (strain ATCC 204508 / S288c) (Baker's yeast).